A 394-amino-acid chain; its full sequence is NAD(P)H-quinone oxidoreductase subunit H (394 aa).

Belongs to the complex I 49 kDa subunit family. NDH-1 can be composed of about 15 different subunits; different subcomplexes with different compositions have been identified which probably have different functions.

The protein localises to the cellular thylakoid membrane. The catalysed reaction is a plastoquinone + NADH + (n+1) H(+)(in) = a plastoquinol + NAD(+) + n H(+)(out). The enzyme catalyses a plastoquinone + NADPH + (n+1) H(+)(in) = a plastoquinol + NADP(+) + n H(+)(out). Functionally, NDH-1 shuttles electrons from an unknown electron donor, via FMN and iron-sulfur (Fe-S) centers, to quinones in the respiratory and/or the photosynthetic chain. The immediate electron acceptor for the enzyme in this species is believed to be plastoquinone. Couples the redox reaction to proton translocation, and thus conserves the redox energy in a proton gradient. Cyanobacterial NDH-1 also plays a role in inorganic carbon-concentration. The protein is NAD(P)H-quinone oxidoreductase subunit H of Synechococcus sp. (strain WH7803).